A 101-amino-acid polypeptide reads, in one-letter code: uncharacterized protein (101 aa).

An N-terminal signal peptide occupies residues 1 to 17; that stretch reads MKKAAVLAVVLSLGLAG. Residue C18 is the site of N-palmitoyl cysteine attachment. C18 carries the S-diacylglycerol cysteine lipid modification.

The protein resides in the cell membrane. This is an uncharacterized protein from Pasteurella multocida (strain Pm70).